A 352-amino-acid chain; its full sequence is Histidinol-phosphate aminotransferase (352 aa).

The residue at position 216 (Lys-216) is an N6-(pyridoxal phosphate)lysine.

It belongs to the class-II pyridoxal-phosphate-dependent aminotransferase family. Histidinol-phosphate aminotransferase subfamily. Pyridoxal 5'-phosphate is required as a cofactor.

The enzyme catalyses L-histidinol phosphate + 2-oxoglutarate = 3-(imidazol-4-yl)-2-oxopropyl phosphate + L-glutamate. Its pathway is amino-acid biosynthesis; L-histidine biosynthesis; L-histidine from 5-phospho-alpha-D-ribose 1-diphosphate: step 7/9. This is Histidinol-phosphate aminotransferase from Methanoculleus marisnigri (strain ATCC 35101 / DSM 1498 / JR1).